Here is a 41-residue protein sequence, read N- to C-terminus: Photosystem II reaction center protein L (41 aa).

Residues 20-40 traverse the membrane as a helical segment; the sequence is LFLGLLLVFVLGILSPATSLT.

The protein belongs to the PsbL family. In terms of assembly, PSII is composed of 1 copy each of membrane proteins PsbA, PsbB, PsbC, PsbD, PsbE, PsbF, PsbH, PsbI, PsbJ, PsbK, PsbL, PsbM, PsbT, PsbX, PsbY, PsbZ, Psb30/Ycf12, peripheral proteins PsbO, CyanoQ (PsbQ), PsbU, PsbV and a large number of cofactors. It forms dimeric complexes.

The protein resides in the cellular thylakoid membrane. One of the components of the core complex of photosystem II (PSII). PSII is a light-driven water:plastoquinone oxidoreductase that uses light energy to abstract electrons from H(2)O, generating O(2) and a proton gradient subsequently used for ATP formation. It consists of a core antenna complex that captures photons, and an electron transfer chain that converts photonic excitation into a charge separation. This subunit is found at the monomer-monomer interface and is required for correct PSII assembly and/or dimerization. This Synechococcus sp. (strain ATCC 27144 / PCC 6301 / SAUG 1402/1) (Anacystis nidulans) protein is Photosystem II reaction center protein L.